The following is a 372-amino-acid chain: Delta-type opioid receptor (372 aa).

Residues 1–47 are Extracellular-facing; it reads MEPVPSARAELQFSLLANVSDTFPSAFPSASANASGSPGARSASSLA. 2 N-linked (GlcNAc...) asparagine glycosylation sites follow: N18 and N33. The chain crosses the membrane as a helical span at residues 48–75; the sequence is LAIAITALYSAVCAVGLLGNVLVMFGIV. Topologically, residues 76-85 are cytoplasmic; that stretch reads RYTKLKTATN. The helical transmembrane segment at 86–110 threads the bilayer; the sequence is IYIFNLALADALATSTLPFQSAKYL. The Extracellular portion of the chain corresponds to 111-122; that stretch reads METWPFGELLCK. A disulfide bond links C121 and C198. A helical membrane pass occupies residues 123–144; sequence AVLSIDYYNMFTSIFTLTMMSV. Residues 145-163 lie on the Cytoplasmic side of the membrane; that stretch reads DRYIAVCHPVKALDFRTPA. Residues 164-186 traverse the membrane as a helical segment; the sequence is KAKLINICIWVLASGVGVPIMVM. At 187–206 the chain is on the extracellular side; it reads AVTQPRDGAVVCTLQFPSPS. Residues 207–238 form a helical membrane-spanning segment; it reads WYWDTVTKICVFLFAFVVPILIITVCYGLMLL. Over 239 to 261 the chain is Cytoplasmic; that stretch reads RLRSVRLLSGSKEKDRSLRRITR. A helical membrane pass occupies residues 262-284; sequence MVLVVVGAFVVCWAPIHIFVIVW. Residues 285-299 are Extracellular-facing; the sequence is TLVDINRRDPLVVAA. A helical membrane pass occupies residues 300 to 321; that stretch reads LHLCIALGYANSSLNPVLYAFL. The Cytoplasmic segment spans residues 322 to 372; sequence DENFKRCFRQLCRAPCGGQEPGSLRRPRQATARERVTACTPSDGPGGGAAA. C333 is lipidated: S-palmitoyl cysteine. Positions 340–372 are disordered; the sequence is QEPGSLRRPRQATARERVTACTPSDGPGGGAAA.

The protein belongs to the G-protein coupled receptor 1 family. May form homooligomers. Forms a heterodimer with OPRM1. Interacts with GPRASP1. Interacts with RTP4; the interaction promotes cell surface localization of the OPRD1-OPRM1 heterodimer. Post-translationally, ubiquitinated. A basal ubiquitination seems not to be related to degradation. Ubiquitination is increased upon formation of OPRM1:OPRD1 oligomers leading to proteasomal degradation; the ubiquitination is diminished by RTP4. Detected in brain, brain stem and brain cortex.

The protein localises to the cell membrane. In terms of biological role, G-protein coupled receptor that functions as a receptor for endogenous enkephalins and for a subset of other opioids. Ligand binding causes a conformation change that triggers signaling via guanine nucleotide-binding proteins (G proteins) and modulates the activity of down-stream effectors, such as adenylate cyclase. Signaling leads to the inhibition of adenylate cyclase activity. Inhibits neurotransmitter release by reducing calcium ion currents and increasing potassium ion conductance. Plays a role in the perception of pain and in opiate-mediated analgesia. Plays a role in developing analgesic tolerance to morphine. The polypeptide is Delta-type opioid receptor (Oprd1) (Rattus norvegicus (Rat)).